The chain runs to 373 residues: Transaminase AMT5 (373 aa).

Arg92 serves as a coordination point for pyridoxal 5'-phosphate. Residue Lys196 is modified to N6-(pyridoxal phosphate)lysine. A pyridoxal 5'-phosphate-binding site is contributed by Glu232.

The protein belongs to the class-IV pyridoxal-phosphate-dependent aminotransferase family. Pyridoxal 5'-phosphate serves as cofactor.

It participates in mycotoxin biosynthesis. In terms of biological role, transaminase; part of the gene clusters that mediate the biosynthesis of AM-toxins, host-selective toxins (HSTs) causing Alternaria blotch on apple, a worldwide distributed disease. AM-toxins are cyclic depsipeptides containing the 3 residues 2-hydroxy-isovaleric acid (2-HIV), dehydroalanine, L-alanine which are common for all 3 AM-toxins I to III. The fourth precursor is L-alpha-amino-methoxyphenyl-valeric acid (L-Amv) for AM-toxin I, L-alpha-amino-phenyl-valeric acid (L-Apv) for AM-toxin II, and L-alpha-amino-hydroxyphenyl-valeric acid (L-Ahv) for AM-toxin III. AM-toxins have two target sites for affecting susceptible apple cells; they cause invagination of the plasma membrane and electrolyte loss and chloroplast disorganization. The non-ribosomal peptide synthetase AMT1 contains 4 catalytic modules and is responsible for activation of each residue in AM-toxin. The aldo-keto reductase AMT2 catalyzes the conversion of 2-keto-isovaleric acid (2-KIV) to 2-hydroxy-isovaleric acid (2-HIV), one of the precursor residues incorporated by AMT1 during AM-toxin biosynthesis, by reduction of its ketone to an alcohol. The cytochrome P450 monooxygenase AMT3 and the thioesterase AMT4 are also important for AM-toxin production, but their exact function within the AM-toxin biosynthesis are not known yet. Up to 21 proteins (including AMT1 to AMT4) are predicted to be involved in AM-toxin biosynthesis since their expression is highly up-regulated in AM-toxin-producing cultures. The sequence is that of Transaminase AMT5 from Alternaria alternata (Alternaria rot fungus).